Reading from the N-terminus, the 467-residue chain is Cysteine--tRNA ligase (467 aa).

C27 contacts Zn(2+). A 'HIGH' region motif is present at residues 29 to 39 (ATVQGLPHIGH). Positions 209, 234, and 238 each coordinate Zn(2+). Positions 265–269 (KMSKS) match the 'KMSKS' region motif. K268 provides a ligand contact to ATP.

The protein belongs to the class-I aminoacyl-tRNA synthetase family. In terms of assembly, monomer. It depends on Zn(2+) as a cofactor.

It is found in the cytoplasm. It catalyses the reaction tRNA(Cys) + L-cysteine + ATP = L-cysteinyl-tRNA(Cys) + AMP + diphosphate. In Mycolicibacterium gilvum (strain PYR-GCK) (Mycobacterium gilvum (strain PYR-GCK)), this protein is Cysteine--tRNA ligase.